Reading from the N-terminus, the 360-residue chain is MKNIFLHSLSLANYRNFKNLELKTDNTPIILIGENGSGKTNILEAISLFYPGRGLRSAKLDDICKASEDYCIVKALLQSQLGLAEFSTHIKRNSNRRITEYNESKIANNELSKFTSMVWLTPQMEGIFTSGSSDRRKFLDRIVYNFYPKHAELVSKYEYYMHERNKILAEDIRDDNWLKIIEGKMADMSSHIANNRLKTLEFMQQAIDELENEFPKADLSIDGIVEQRILDGEENLVNFITAELYQTRSKDKLLGRTSFGVHKSDFLVKHQKKNILAKFCSTGEQKAILIAIILAEMNYVIKLTKIAPILLLDEVFVHLDDTRRQYLIEFFTTLSMQLWVTDTNLEGIENFASKAQLIKL.

Position 33–40 (33–40) interacts with ATP; it reads GENGSGKT.

This sequence belongs to the RecF family.

Its subcellular location is the cytoplasm. Its function is as follows. The RecF protein is involved in DNA metabolism; it is required for DNA replication and normal SOS inducibility. RecF binds preferentially to single-stranded, linear DNA. It also seems to bind ATP. This is DNA replication and repair protein RecF from Rickettsia akari (strain Hartford).